A 788-amino-acid polypeptide reads, in one-letter code: Protein kintoun (788 aa).

Disordered stretches follow at residues 194 to 249 (LRKP…SEQD), 415 to 438 (NNSE…EISP), and 628 to 754 (HKEH…SSSV). Residues 225-241 (GKEKKDQKRVIKEEHKQ) show a composition bias toward basic and acidic residues. A compositionally biased stretch (polar residues) spans 417–427 (SEGLTSESNLD). Basic and acidic residues-rich tracts occupy residues 628-644 (HKEH…DVGV) and 667-682 (ENTE…RYEE). Composition is skewed to polar residues over residues 685-701 (STSC…QKDS) and 744-754 (NFDSRPASSSV).

Belongs to the PIH1 family. Kintoun subfamily.

The protein localises to the cytoplasm. It is found in the dynein axonemal particle. Functionally, required for cytoplasmic pre-assembly of axonemal dyneins, thereby playing a central role in motility in cilia and flagella. Involved in pre-assembly of dynein arm complexes in the cytoplasm before intraflagellar transport loads them for the ciliary compartment. The chain is Protein kintoun from Xenopus laevis (African clawed frog).